Here is a 903-residue protein sequence, read N- to C-terminus: Protein translocase subunit SecA (903 aa).

ATP contacts are provided by residues Gln-85, 103 to 107 (GEGKT), and Asp-492. The tract at residues 863–890 (GDGVKQPVRRDKKVGRNSPCPCGSGKKY) is disordered. Zn(2+)-binding residues include Cys-882, Cys-884, Cys-893, and Cys-894.

The protein belongs to the SecA family. In terms of assembly, monomer and homodimer. Part of the essential Sec protein translocation apparatus which comprises SecA, SecYEG and auxiliary proteins SecDF. Other proteins may also be involved. Zn(2+) is required as a cofactor.

It localises to the cell membrane. The protein localises to the cytoplasm. The enzyme catalyses ATP + H2O + cellular proteinSide 1 = ADP + phosphate + cellular proteinSide 2.. Its function is as follows. Part of the Sec protein translocase complex. Interacts with the SecYEG preprotein conducting channel. Has a central role in coupling the hydrolysis of ATP to the transfer of proteins into and across the cell membrane, serving as an ATP-driven molecular motor driving the stepwise translocation of polypeptide chains across the membrane. In Desulforudis audaxviator (strain MP104C), this protein is Protein translocase subunit SecA.